Consider the following 166-residue polypeptide: MSTKPLILLLANSKNSINRKFAKALEQQLNAELIELVDYQVDFYCEDLEKDHFPEKIKSLVRKLHDHKTLIFVTPEHNGFVPAFAKNTIDWMTRDTQYGKNQFLKELDGIICCVTPAAKSGGKTVLELLTKFFSFSGLNVKGAVLVNGYHDGFDFQPFITDVQKLI.

117-124 (AAKSGGKT) is an ATP binding site.

This is an uncharacterized protein from Mycoplasma pneumoniae (strain ATCC 29342 / M129 / Subtype 1) (Mycoplasmoides pneumoniae).